Consider the following 93-residue polypeptide: Pyrimidine/purine nucleoside phosphorylase (93 aa).

It belongs to the nucleoside phosphorylase PpnP family.

The enzyme catalyses a purine D-ribonucleoside + phosphate = a purine nucleobase + alpha-D-ribose 1-phosphate. It catalyses the reaction adenosine + phosphate = alpha-D-ribose 1-phosphate + adenine. It carries out the reaction cytidine + phosphate = cytosine + alpha-D-ribose 1-phosphate. The catalysed reaction is guanosine + phosphate = alpha-D-ribose 1-phosphate + guanine. The enzyme catalyses inosine + phosphate = alpha-D-ribose 1-phosphate + hypoxanthine. It catalyses the reaction thymidine + phosphate = 2-deoxy-alpha-D-ribose 1-phosphate + thymine. It carries out the reaction uridine + phosphate = alpha-D-ribose 1-phosphate + uracil. The catalysed reaction is xanthosine + phosphate = alpha-D-ribose 1-phosphate + xanthine. In terms of biological role, catalyzes the phosphorolysis of diverse nucleosides, yielding D-ribose 1-phosphate and the respective free bases. Can use uridine, adenosine, guanosine, cytidine, thymidine, inosine and xanthosine as substrates. Also catalyzes the reverse reactions. This Pseudomonas syringae pv. tomato (strain ATCC BAA-871 / DC3000) protein is Pyrimidine/purine nucleoside phosphorylase.